The chain runs to 327 residues: Undecaprenyl-phosphate 4-deoxy-4-formamido-L-arabinose transferase (327 aa).

2 helical membrane passes run 233 to 253 and 268 to 288; these read ILSL…LLLI and VFTL…GMGL.

This sequence belongs to the glycosyltransferase 2 family.

The protein resides in the cell inner membrane. The catalysed reaction is UDP-4-deoxy-4-formamido-beta-L-arabinose + di-trans,octa-cis-undecaprenyl phosphate = 4-deoxy-4-formamido-alpha-L-arabinopyranosyl di-trans,octa-cis-undecaprenyl phosphate + UDP. Its pathway is glycolipid biosynthesis; 4-amino-4-deoxy-alpha-L-arabinose undecaprenyl phosphate biosynthesis; 4-amino-4-deoxy-alpha-L-arabinose undecaprenyl phosphate from UDP-4-deoxy-4-formamido-beta-L-arabinose and undecaprenyl phosphate: step 1/2. It participates in bacterial outer membrane biogenesis; lipopolysaccharide biosynthesis. In terms of biological role, catalyzes the transfer of 4-deoxy-4-formamido-L-arabinose from UDP to undecaprenyl phosphate. The modified arabinose is attached to lipid A and is required for resistance to polymyxin and cationic antimicrobial peptides. The protein is Undecaprenyl-phosphate 4-deoxy-4-formamido-L-arabinose transferase of Pectobacterium carotovorum subsp. carotovorum (strain PC1).